The primary structure comprises 297 residues: uncharacterized protein (297 aa).

The active site involves glutamate 46.

Belongs to the PhzF family. In terms of assembly, homodimer and homotetramer.

This is an uncharacterized protein from Escherichia coli O157:H7.